Consider the following 114-residue polypeptide: Large ribosomal subunit protein uL22 (114 aa).

The protein belongs to the universal ribosomal protein uL22 family. As to quaternary structure, part of the 50S ribosomal subunit.

Its function is as follows. This protein binds specifically to 23S rRNA; its binding is stimulated by other ribosomal proteins, e.g. L4, L17, and L20. It is important during the early stages of 50S assembly. It makes multiple contacts with different domains of the 23S rRNA in the assembled 50S subunit and ribosome. The globular domain of the protein is located near the polypeptide exit tunnel on the outside of the subunit, while an extended beta-hairpin is found that lines the wall of the exit tunnel in the center of the 70S ribosome. The sequence is that of Large ribosomal subunit protein uL22 from Desulfitobacterium hafniense (strain Y51).